The primary structure comprises 563 residues: Lipase 2 (563 aa).

An N-terminal signal peptide occupies residues 1-19 (MVSKSLFLAAAVNLAGVLA). Glutamine 20 is modified (pyrrolidone carboxylic acid). A disulfide bridge links cysteine 80 with cysteine 124. Residue serine 236 is the Acyl-ester intermediate of the active site. Cysteines 295 and 307 form a disulfide. Asparagine 302 carries N-linked (GlcNAc...) asparagine glycosylation. The Charge relay system role is filled by glutamate 373. Residue asparagine 383 is glycosylated (N-linked (GlcNAc...) asparagine). Histidine 482 functions as the Charge relay system in the catalytic mechanism.

It belongs to the type-B carboxylesterase/lipase family. In terms of assembly, monomer.

The protein resides in the secreted. It catalyses the reaction a triacylglycerol + H2O = a diacylglycerol + a fatty acid + H(+). Functionally, hydrolyzes all ester bonds in triglyceride and displays a high affinity for triolein. For unsaturated substrates having long fatty acyl chains (C18:2 cis-9, cis-12 and C18:3 cis-9, cis-12, cis-15) GCL I shows higher specific activity than GCL II, whereas GCL II shows higher specific activity against saturated substrates having short fatty acid chains (C8, C10, C12 and C14). This Geotrichum candidum (Oospora lactis) protein is Lipase 2 (LIP2).